Consider the following 502-residue polypeptide: Cytochrome P450 71A8 (502 aa).

Residues isoleucine 16–threonine 36 traverse the membrane as a helical segment. Residues proline 93 to serine 119 are disordered. Residue cysteine 447 coordinates heme.

This sequence belongs to the cytochrome P450 family. The cofactor is heme.

The protein resides in the membrane. This is Cytochrome P450 71A8 (CYP71A8) from Mentha piperita (Peppermint).